Here is a 380-residue protein sequence, read N- to C-terminus: 1-deoxy-D-xylulose 5-phosphate reductoisomerase (380 aa).

8 residues coordinate NADPH: Ser10, Gly11, Ser12, Ile13, Gly36, Lys37, Asn38, and Asn120. Lys121 is a binding site for 1-deoxy-D-xylulose 5-phosphate. Glu122 serves as a coordination point for NADPH. Asp146 contributes to the Mn(2+) binding site. Ser147, Glu148, Ser172, and His195 together coordinate 1-deoxy-D-xylulose 5-phosphate. Glu148 is a binding site for Mn(2+). Gly201 contributes to the NADPH binding site. Ser208, Asn213, Lys214, and Glu217 together coordinate 1-deoxy-D-xylulose 5-phosphate. Glu217 contacts Mn(2+).

It belongs to the DXR family. It depends on Mg(2+) as a cofactor. Mn(2+) serves as cofactor.

The catalysed reaction is 2-C-methyl-D-erythritol 4-phosphate + NADP(+) = 1-deoxy-D-xylulose 5-phosphate + NADPH + H(+). Its pathway is isoprenoid biosynthesis; isopentenyl diphosphate biosynthesis via DXP pathway; isopentenyl diphosphate from 1-deoxy-D-xylulose 5-phosphate: step 1/6. Catalyzes the NADPH-dependent rearrangement and reduction of 1-deoxy-D-xylulose-5-phosphate (DXP) to 2-C-methyl-D-erythritol 4-phosphate (MEP). The polypeptide is 1-deoxy-D-xylulose 5-phosphate reductoisomerase (Bacillus cereus (strain ATCC 10987 / NRS 248)).